The chain runs to 523 residues: Acetyl-CoA hydrolase (523 aa).

277-281 provides a ligand contact to CoA; the sequence is GIGNI. The active-site 5-glutamyl coenzyme A thioester intermediate is the Glu-302. Residues Asn-392 and Gly-396 each coordinate CoA.

The protein belongs to the acetyl-CoA hydrolase/transferase family.

The protein localises to the cytoplasm. It catalyses the reaction acetyl-CoA + H2O = acetate + CoA + H(+). Its function is as follows. Presumably involved in regulating the intracellular acetyl-CoA pool for fatty acid and cholesterol synthesis and fatty acid oxidation. The chain is Acetyl-CoA hydrolase (ACH1) from Eremothecium gossypii (strain ATCC 10895 / CBS 109.51 / FGSC 9923 / NRRL Y-1056) (Yeast).